Here is a 148-residue protein sequence, read N- to C-terminus: SPbeta prophage-derived disulfide bond formation protein B (148 aa).

A helical transmembrane segment spans residues lysine 7–phenylalanine 26. A disulfide bond links cysteine 36 and cysteine 39. A run of 2 helical transmembrane segments spans residues tyrosine 41 to lysine 60 and tyrosine 67 to isoleucine 84. A disulfide bridge links cysteine 95 with cysteine 102. The helical transmembrane segment at glycine 111–isoleucine 135 threads the bilayer.

The protein belongs to the DsbB family. BdbC subfamily.

It is found in the cell membrane. Functionally, important but not absolutely essential for the production of the lantibiotic sublancin 168, it may also be required for the stability of other secreted proteins. Not required for competence for DNA uptake. This chain is SPbeta prophage-derived disulfide bond formation protein B (bdbB), found in Bacillus subtilis (strain 168).